The chain runs to 235 residues: tRNA (guanine-N(1)-)-methyltransferase (235 aa).

S-adenosyl-L-methionine contacts are provided by residues Gly114 and 134–139 (IGDYIL).

This sequence belongs to the RNA methyltransferase TrmD family. Homodimer.

The protein resides in the cytoplasm. It catalyses the reaction guanosine(37) in tRNA + S-adenosyl-L-methionine = N(1)-methylguanosine(37) in tRNA + S-adenosyl-L-homocysteine + H(+). Specifically methylates guanosine-37 in various tRNAs. The polypeptide is tRNA (guanine-N(1)-)-methyltransferase (Ehrlichia canis (strain Jake)).